The following is a 160-amino-acid chain: Small ribosomal subunit protein uS9 (160 aa).

The protein belongs to the universal ribosomal protein uS9 family.

The sequence is that of Small ribosomal subunit protein uS9 from Rhodopseudomonas palustris (strain ATCC BAA-98 / CGA009).